The following is a 213-amino-acid chain: tRNA (guanine-N(7)-)-methyltransferase (213 aa).

S-adenosyl-L-methionine contacts are provided by Glu44, Glu69, Asp96, and Asp118. Asp118 is a catalytic residue. Lys122 contributes to the substrate binding site. Positions 124-129 are interaction with RNA; sequence RHEKRR. Residues Asp154 and 191–194 each bind substrate; that span reads TEYE.

It belongs to the class I-like SAM-binding methyltransferase superfamily. TrmB family. In terms of assembly, homodimer.

It catalyses the reaction guanosine(46) in tRNA + S-adenosyl-L-methionine = N(7)-methylguanosine(46) in tRNA + S-adenosyl-L-homocysteine. It functions in the pathway tRNA modification; N(7)-methylguanine-tRNA biosynthesis. Catalyzes the formation of N(7)-methylguanine at position 46 (m7G46) in tRNA. The chain is tRNA (guanine-N(7)-)-methyltransferase from Bacillus subtilis (strain 168).